Consider the following 264-residue polypeptide: tRNA (guanine-N(1)-)-methyltransferase (264 aa).

S-adenosyl-L-methionine contacts are provided by residues glycine 125 and 145-150 (LGDFVL).

This sequence belongs to the RNA methyltransferase TrmD family. As to quaternary structure, homodimer.

Its subcellular location is the cytoplasm. The catalysed reaction is guanosine(37) in tRNA + S-adenosyl-L-methionine = N(1)-methylguanosine(37) in tRNA + S-adenosyl-L-homocysteine + H(+). Specifically methylates guanosine-37 in various tRNAs. The polypeptide is tRNA (guanine-N(1)-)-methyltransferase (Burkholderia ambifaria (strain ATCC BAA-244 / DSM 16087 / CCUG 44356 / LMG 19182 / AMMD) (Burkholderia cepacia (strain AMMD))).